We begin with the raw amino-acid sequence, 151 residues long: Small ribosomal subunit protein bS6 (151 aa).

The disordered stretch occupies residues 98 to 151 (EESPIQKAEKENRERKNRAERRAAEAAAATETEKSESEESAEEETSTDTTGEEE). Residues 135 to 151 (EESAEEETSTDTTGEEE) show a composition bias toward acidic residues.

This sequence belongs to the bacterial ribosomal protein bS6 family.

In terms of biological role, binds together with bS18 to 16S ribosomal RNA. This is Small ribosomal subunit protein bS6 from Teredinibacter turnerae (strain ATCC 39867 / T7901).